We begin with the raw amino-acid sequence, 546 residues long: Putative inactive G-type lectin S-receptor-like serine/threonine-protein kinase SRK (546 aa).

A signal peptide spans 1–31 (MRGELPNKHHSYTFFVFLFFFLILFPDLSIS). At 32-441 (VNTLSATESL…FGERRTIRGK (410 aa)) the chain is on the extracellular side. Residues 34-154 (TLSATESLTI…KINESDEFLW (121 aa)) form the Bulb-type lectin domain. Asn46, Asn120, Asn147, and Asn243 each carry an N-linked (GlcNAc...) asparagine glycan. The EGF-like; atypical domain maps to 293 to 329 (PKDTCDLYGICGPYAYCDMSTSPTCNCIKGFQPLSPQ). Disulfide bonds link Cys297–Cys309, Cys303–Cys317, Cys378–Cys403, and Cys382–Cys388. The 81-residue stretch at 348–428 (CGEDRFFRLM…DGQDLFVRLA (81 aa)) folds into the PAN domain. Asn387 carries N-linked (GlcNAc...) asparagine glycosylation. Residues 442 to 462 (IIGLIIGISLMLVLSFIIYCF) form a helical membrane-spanning segment. The Cytoplasmic portion of the chain corresponds to 463–546 (WKKKQKRARA…IVYKGRLLDG (84 aa)). Positions 524 to 546 (FSDSNILGRGGFGIVYKGRLLDG) constitute a Protein kinase domain. Position 530 to 538 (530 to 538 (LGRGGFGIV)) interacts with ATP.

Belongs to the protein kinase superfamily. Ser/Thr protein kinase family.

Its subcellular location is the cell membrane. Truncated and inactivated form of SRK, the female specificity determinant of self-incompatibility when active. Most A.thaliana cultivars contain such an inactive form and thus, are self-fertiles. The polypeptide is Putative inactive G-type lectin S-receptor-like serine/threonine-protein kinase SRK (PSEUDOSRKA) (Arabidopsis thaliana (Mouse-ear cress)).